Reading from the N-terminus, the 363-residue chain is MKVAISGGGTGGHVYPALAFIRELKKLHPEAEFLYIGTEKGLEADIVKREGIPFESIEITGFKRSLSLENVKTIMRFLSGAKKSKQILRDFKPDVVIGTGGYVCGPVVYAAAKLKIPTLIHEQNSVAGLTNKFLSRYTDKVAICFEEVSDSFASEKIVFTGNPRASEVVGVESEGALEAYGLESGKPTVLVFGGSRGARGVNEAVEAILPEWNKRDFQLLYVTGDVHYEKIKDTLADLNLGSHISVQPFIYDMPKILNAVTLVVSRAGATTLAELTALGVPSILIPSPYVTANHQENNARALEKNNAAIVITEAELKNTDLMATVDSILTDEEKLNAMKASAKQMGRPEAAAKLVEAVLGIMK.

UDP-N-acetyl-alpha-D-glucosamine is bound by residues 10 to 12 (TGG), asparagine 124, serine 195, isoleucine 250, and glutamine 295.

Belongs to the glycosyltransferase 28 family. MurG subfamily.

It localises to the cell membrane. It catalyses the reaction di-trans,octa-cis-undecaprenyl diphospho-N-acetyl-alpha-D-muramoyl-L-alanyl-D-glutamyl-meso-2,6-diaminopimeloyl-D-alanyl-D-alanine + UDP-N-acetyl-alpha-D-glucosamine = di-trans,octa-cis-undecaprenyl diphospho-[N-acetyl-alpha-D-glucosaminyl-(1-&gt;4)]-N-acetyl-alpha-D-muramoyl-L-alanyl-D-glutamyl-meso-2,6-diaminopimeloyl-D-alanyl-D-alanine + UDP + H(+). It functions in the pathway cell wall biogenesis; peptidoglycan biosynthesis. Functionally, cell wall formation. Catalyzes the transfer of a GlcNAc subunit on undecaprenyl-pyrophosphoryl-MurNAc-pentapeptide (lipid intermediate I) to form undecaprenyl-pyrophosphoryl-MurNAc-(pentapeptide)GlcNAc (lipid intermediate II). This is UDP-N-acetylglucosamine--N-acetylmuramyl-(pentapeptide) pyrophosphoryl-undecaprenol N-acetylglucosamine transferase from Listeria welshimeri serovar 6b (strain ATCC 35897 / DSM 20650 / CCUG 15529 / CIP 8149 / NCTC 11857 / SLCC 5334 / V8).